We begin with the raw amino-acid sequence, 128 residues long: Transcription antitermination protein NusB (128 aa).

This sequence belongs to the NusB family.

Involved in transcription antitermination. Required for transcription of ribosomal RNA (rRNA) genes. Binds specifically to the boxA antiterminator sequence of the ribosomal RNA (rrn) operons. This Listeria welshimeri serovar 6b (strain ATCC 35897 / DSM 20650 / CCUG 15529 / CIP 8149 / NCTC 11857 / SLCC 5334 / V8) protein is Transcription antitermination protein NusB.